Reading from the N-terminus, the 106-residue chain is UPF0145 protein PputW619_2377 (106 aa).

This sequence belongs to the UPF0145 family.

This Pseudomonas putida (strain W619) protein is UPF0145 protein PputW619_2377.